Here is a 131-residue protein sequence, read N- to C-terminus: UPF0102 protein H16_A3579 (131 aa).

Belongs to the UPF0102 family.

This chain is UPF0102 protein H16_A3579, found in Cupriavidus necator (strain ATCC 17699 / DSM 428 / KCTC 22496 / NCIMB 10442 / H16 / Stanier 337) (Ralstonia eutropha).